The sequence spans 403 residues: Tyrosine--tRNA ligase (403 aa).

The 'HIGH' region motif lies at 42 to 51 (PTAPDLHLGH). The 'KMSKS' region signature appears at 226–230 (KMSKS). An ATP-binding site is contributed by K229. The 61-residue stretch at 336 to 396 (MPISAVLNKA…GKKAFGRVTL (61 aa)) folds into the S4 RNA-binding domain.

The protein belongs to the class-I aminoacyl-tRNA synthetase family. TyrS type 2 subfamily. As to quaternary structure, homodimer.

It is found in the cytoplasm. It catalyses the reaction tRNA(Tyr) + L-tyrosine + ATP = L-tyrosyl-tRNA(Tyr) + AMP + diphosphate + H(+). Its function is as follows. Catalyzes the attachment of tyrosine to tRNA(Tyr) in a two-step reaction: tyrosine is first activated by ATP to form Tyr-AMP and then transferred to the acceptor end of tRNA(Tyr). This Pseudomonas syringae pv. syringae (strain B728a) protein is Tyrosine--tRNA ligase.